The chain runs to 386 residues: Endonuclease III homolog 2, chloroplastic (386 aa).

The transit peptide at 1-50 (MILTGAASTFPIVARVLNAMNRRMYAATTLSSAKSISAESLNLRSDSNSE) directs the protein to the chloroplast. Residues 44–66 (RSDSNSEAAHGASESETRVSLRK) form a disordered region. Residues 252–278 (YDGDIPRTLEELLSLPGVGPKIAHLVL) form the HhH domain. K272 (nucleophile; for N-glycosylase activity) is an active-site residue. 4 residues coordinate [4Fe-4S] cluster: C347, C354, C357, and C363.

The protein belongs to the Nth/MutY family. Requires [4Fe-4S] cluster as cofactor.

The protein localises to the plastid. It is found in the chloroplast stroma. It localises to the chloroplast nucleoid. The catalysed reaction is 2'-deoxyribonucleotide-(2'-deoxyribose 5'-phosphate)-2'-deoxyribonucleotide-DNA = a 3'-end 2'-deoxyribonucleotide-(2,3-dehydro-2,3-deoxyribose 5'-phosphate)-DNA + a 5'-end 5'-phospho-2'-deoxyribonucleoside-DNA + H(+). In terms of biological role, bifunctional DNA N-glycosylase with associated apurinic/apyrimidinic (AP) lyase function that catalyzes the first step in base excision repair (BER), the primary repair pathway for the repair of oxidative DNA damage. The DNA N-glycosylase activity releases the damaged DNA base from DNA by cleaving the N-glycosidic bond, leaving an AP site. The AP lyase activity cleaves the phosphodiester bond 3' to the AP site by a beta-elimination. Primarily recognizes and repairs oxidative base damage of pyrimidines. In Arabidopsis thaliana (Mouse-ear cress), this protein is Endonuclease III homolog 2, chloroplastic (NTH2).